A 94-amino-acid polypeptide reads, in one-letter code: Integration host factor subunit beta (94 aa).

Belongs to the bacterial histone-like protein family. As to quaternary structure, heterodimer of an alpha and a beta chain.

Its function is as follows. This protein is one of the two subunits of integration host factor, a specific DNA-binding protein that functions in genetic recombination as well as in transcriptional and translational control. This is Integration host factor subunit beta (ihfB) from Haemophilus influenzae (strain ATCC 51907 / DSM 11121 / KW20 / Rd).